A 363-amino-acid chain; its full sequence is 3-isopropylmalate dehydrogenase (363 aa).

Residue 76 to 89 (GPKWDTLPGHLRPE) coordinates NAD(+). Substrate-binding residues include Arg96, Arg106, Arg134, and Asp223. Mg(2+)-binding residues include Asp223, Asp247, and Asp251. 281–293 (GSAPDIAGKGVAN) contacts NAD(+).

The protein belongs to the isocitrate and isopropylmalate dehydrogenases family. LeuB type 1 subfamily. In terms of assembly, homodimer. The cofactor is Mg(2+). Requires Mn(2+) as cofactor.

The protein localises to the cytoplasm. It catalyses the reaction (2R,3S)-3-isopropylmalate + NAD(+) = 4-methyl-2-oxopentanoate + CO2 + NADH. It participates in amino-acid biosynthesis; L-leucine biosynthesis; L-leucine from 3-methyl-2-oxobutanoate: step 3/4. In terms of biological role, catalyzes the oxidation of 3-carboxy-2-hydroxy-4-methylpentanoate (3-isopropylmalate) to 3-carboxy-4-methyl-2-oxopentanoate. The product decarboxylates to 4-methyl-2 oxopentanoate. This is 3-isopropylmalate dehydrogenase from Halalkalibacterium halodurans (strain ATCC BAA-125 / DSM 18197 / FERM 7344 / JCM 9153 / C-125) (Bacillus halodurans).